A 290-amino-acid polypeptide reads, in one-letter code: Light-independent protochlorophyllide reductase iron-sulfur ATP-binding protein (290 aa).

ATP is bound by residues 10-15 (GIGKST) and Lys39. Ser14 contacts Mg(2+). Positions 95 and 129 each coordinate [4Fe-4S] cluster. 180–181 (NR) serves as a coordination point for ATP.

Belongs to the NifH/BchL/ChlL family. As to quaternary structure, homodimer. Protochlorophyllide reductase is composed of three subunits; ChlL, ChlN and ChlB. [4Fe-4S] cluster is required as a cofactor.

It is found in the plastid. The protein resides in the chloroplast. It carries out the reaction chlorophyllide a + oxidized 2[4Fe-4S]-[ferredoxin] + 2 ADP + 2 phosphate = protochlorophyllide a + reduced 2[4Fe-4S]-[ferredoxin] + 2 ATP + 2 H2O. The protein operates within porphyrin-containing compound metabolism; chlorophyll biosynthesis (light-independent). Its function is as follows. Component of the dark-operative protochlorophyllide reductase (DPOR) that uses Mg-ATP and reduced ferredoxin to reduce ring D of protochlorophyllide (Pchlide) to form chlorophyllide a (Chlide). This reaction is light-independent. The L component serves as a unique electron donor to the NB-component of the complex, and binds Mg-ATP. The chain is Light-independent protochlorophyllide reductase iron-sulfur ATP-binding protein from Anthoceros angustus (Hornwort).